The following is a 201-amino-acid chain: Glutathione peroxidase 1 (201 aa).

Serine 32 carries the phosphoserine modification. Selenocysteine 47 is a catalytic residue. Residue selenocysteine 47 is a non-standard amino acid, selenocysteine. N6-acetyllysine; alternate is present on residues lysine 86, lysine 112, and lysine 146. N6-succinyllysine; alternate occurs at positions 86, 112, and 146. Phosphoserine occurs at positions 195 and 199.

The protein belongs to the glutathione peroxidase family. Homotetramer. Interacts with MIEN1. In terms of processing, during periods of oxidative stress, Sec-47 may react with a superoxide radical, irreversibly lose hydroselenide and be converted to dehydroalanine.

It localises to the cytoplasm. It is found in the mitochondrion. The catalysed reaction is 2 glutathione + H2O2 = glutathione disulfide + 2 H2O. It catalyses the reaction a hydroperoxy polyunsaturated fatty acid + 2 glutathione = a hydroxy polyunsaturated fatty acid + glutathione disulfide + H2O. The enzyme catalyses tert-butyl hydroperoxide + 2 glutathione = tert-butanol + glutathione disulfide + H2O. It carries out the reaction cumene hydroperoxide + 2 glutathione = 2-phenylpropan-2-ol + glutathione disulfide + H2O. The catalysed reaction is (13S)-hydroperoxy-(9Z,11E)-octadecadienoate + 2 glutathione = (13S)-hydroxy-(9Z,11E)-octadecadienoate + glutathione disulfide + H2O. It catalyses the reaction (9S)-hydroperoxy-(10E,12Z)-octadecadienoate + 2 glutathione = (9S)-hydroxy-(10E,12Z)-octadecadienoate + glutathione disulfide + H2O. The enzyme catalyses (5S)-hydroperoxy-(6E,8Z,11Z,14Z)-eicosatetraenoate + 2 glutathione = (5S)-hydroxy-(6E,8Z,11Z,14Z)-eicosatetraenoate + glutathione disulfide + H2O. It carries out the reaction (12S)-hydroperoxy-(5Z,8Z,10E,14Z)-eicosatetraenoate + 2 glutathione = (12S)-hydroxy-(5Z,8Z,10E,14Z)-eicosatetraenoate + glutathione disulfide + H2O. The catalysed reaction is (12R)-hydroperoxy-(5Z,8Z,10E,14Z)-eicosatetraenoate + 2 glutathione = (12R)-hydroxy-(5Z,8Z,10E,14Z)-eicosatetraenoate + glutathione disulfide + H2O. It catalyses the reaction (15S)-hydroperoxy-(5Z,8Z,11Z,13E)-eicosatetraenoate + 2 glutathione = (15S)-hydroxy-(5Z,8Z,11Z,13E)-eicosatetraenoate + glutathione disulfide + H2O. The enzyme catalyses (5S)-hydroperoxy-(6E,8Z,11Z,14Z,17Z)-eicosapentaenoate + 2 glutathione = (5S)-hydroxy-(6E,8Z,11Z,14Z,17Z)-eicosapentaenoate + glutathione disulfide + H2O. It carries out the reaction (12S)-hydroperoxy-(5Z,8Z,10E,14Z,17Z)-eicosapentaenoate + 2 glutathione = (12S)-hydroxy-(5Z,8Z,10E,14Z,17Z)-eicosapentaenoate + glutathione disulfide + H2O. The catalysed reaction is (15S)-hydroperoxy-(5Z,8Z,11Z,13E,17Z)-eicosapentaenoate + 2 glutathione = (15S)-hydroxy-(5Z,8Z,11Z,13E,17Z)-eicosapentaenoate + glutathione disulfide + H2O. It catalyses the reaction (15S)-hydroperoxy-(11Z,13E)-eicosadienoate + 2 glutathione = (15S)-hydroxy-(11Z,13E)-eicosadienoate + glutathione disulfide + H2O. The enzyme catalyses (17S)-hydroperoxy-(4Z,7Z,10Z,13Z,15E,19Z)-docosahexaenoate + 2 glutathione = (17S)-hydroxy-(4Z,7Z,10Z,13Z,15E,19Z)-docosahexaenoate + glutathione disulfide + H2O. Functionally, catalyzes the reduction of hydroperoxides in a glutathione-dependent manner thus regulating cellular redox homeostasis. Can reduce small soluble hydroperoxides such as H2O2, cumene hydroperoxide and tert-butyl hydroperoxide, as well as several fatty acid-derived hydroperoxides. In platelets catalyzes the reduction of 12-hydroperoxyeicosatetraenoic acid, the primary product of the arachidonate 12-lipoxygenase pathway. This is Glutathione peroxidase 1 (GPX1) from Macaca fuscata fuscata (Japanese macaque).